Here is an 891-residue protein sequence, read N- to C-terminus: DNA polymerase I (891 aa).

One can recognise a 5'-3' exonuclease domain in the interval 1–313; that stretch reads MEQPVIKEGT…LLDNTPALDN (313 aa). Residues 314 to 488 form the 3'-5' exonuclease domain; it reads TPKKSCMIVL…RLCEYFEKGG (175 aa). Residues 492–890 are polymerase; the sequence is NLLSLAREIE…FIAKRWNELK (399 aa).

This sequence belongs to the DNA polymerase type-A family. In terms of assembly, single-chain monomer with multiple functions.

The enzyme catalyses DNA(n) + a 2'-deoxyribonucleoside 5'-triphosphate = DNA(n+1) + diphosphate. Its function is as follows. In addition to polymerase activity, this DNA polymerase exhibits 3'-5' and 5'-3' exonuclease activity. In Helicobacter pylori (strain ATCC 700392 / 26695) (Campylobacter pylori), this protein is DNA polymerase I (polA).